Reading from the N-terminus, the 428-residue chain is Chaperone SurA (428 aa).

An N-terminal signal peptide occupies residues 1–13 (MLGALLLSGAVHA). PpiC domains follow at residues 164–265 (SEEF…KLLE) and 276–375 (RDEV…EVLG).

Its subcellular location is the periplasm. The enzyme catalyses [protein]-peptidylproline (omega=180) = [protein]-peptidylproline (omega=0). In terms of biological role, chaperone involved in the correct folding and assembly of outer membrane proteins. Recognizes specific patterns of aromatic residues and the orientation of their side chains, which are found more frequently in integral outer membrane proteins. May act in both early periplasmic and late outer membrane-associated steps of protein maturation. The protein is Chaperone SurA of Pseudomonas syringae pv. tomato (strain ATCC BAA-871 / DC3000).